The sequence spans 247 residues: F-box and leucine-rich protein 22 (247 aa).

Residues 6–52 (TMHITQLNRECLLHLFSFLDKDSRKSLARTCSQLHDVFEDPALWSLL) enclose the F-box domain. 2 disordered regions span residues 124-154 (SPRR…PDHS) and 173-247 (GLGS…AFPQ). Residues 184 to 200 (ETPPAPGVSWGPPPPGA) are compositionally biased toward pro residues.

In terms of assembly, directly interacts with SKP1 and CUL1. In terms of tissue distribution, enriched in cardiac muscle.

The protein localises to the cytoplasm. It localises to the myofibril. Its subcellular location is the sarcomere. It is found in the z line. It functions in the pathway protein modification; protein ubiquitination. Its function is as follows. Substrate-recognition component of the SCF (SKP1-CUL1-F-box protein)-type E3 ubiquitin ligase complex. Promotes ubiquitination of sarcomeric proteins alpha-actinin-2 (ACTN2) and filamin-C (FLNC). The sequence is that of F-box and leucine-rich protein 22 (FBXL22) from Homo sapiens (Human).